Consider the following 162-residue polypeptide: Putative auxin-responsive protein IAA28 (162 aa).

In terms of domain architecture, PB1 spans 23–118; that stretch reads SRFVKVFMHG…TVKRIYIVPA (96 aa). Positions 122–141 are disordered; the sequence is NESEYQEEEEDNAAAAATAD.

It belongs to the Aux/IAA family. Homodimers and heterodimers.

It is found in the nucleus. Functionally, aux/IAA proteins are short-lived transcriptional factors that function as repressors of early auxin response genes at low auxin concentrations. The sequence is that of Putative auxin-responsive protein IAA28 (IAA28) from Oryza sativa subsp. japonica (Rice).